Here is a 201-residue protein sequence, read N- to C-terminus: Recombination protein RecR (201 aa).

The C4-type zinc-finger motif lies at 60–75; that stretch reads CETCGNIDTRSPCTIC. One can recognise a Toprim domain in the interval 83–178; sequence SIIVVVADVA…KVTRLAHGVP (96 aa).

It belongs to the RecR family.

Functionally, may play a role in DNA repair. It seems to be involved in an RecBC-independent recombinational process of DNA repair. It may act with RecF and RecO. This is Recombination protein RecR from Nitrobacter winogradskyi (strain ATCC 25391 / DSM 10237 / CIP 104748 / NCIMB 11846 / Nb-255).